Here is a 326-residue protein sequence, read N- to C-terminus: Serpentine receptor class alpha-12 (326 aa).

Residues 1-17 lie on the Extracellular side of the membrane; sequence MSCASEVQAQLFTHPVQ. Residues 18-38 traverse the membrane as a helical segment; it reads IIYACVQTVLFLATIIGSLLA. Topologically, residues 39–54 are cytoplasmic; that stretch reads IVQLCKKTTIPDSTKV. A helical transmembrane segment spans residues 55 to 75; that stretch reads LLIGALFFANAHELAYFSSPF. The Extracellular segment spans residues 76–101; the sequence is KVFKMNLFHTNTSCYPLASTLECIPT. A helical membrane pass occupies residues 102–122; that stretch reads TTVLAMGISGNMLIQSALSIF. The Cytoplasmic portion of the chain corresponds to 123–138; the sequence is RLLATIFPVCYSRMRA. The helical transmembrane segment at 139-159 threads the bilayer; sequence LPGVVLLFMVLIPSFLSYSWI. Residues 160-185 lie on the Extracellular side of the membrane; sequence RSDIVLDDYQMFCSQWSANISSRANT. A helical transmembrane segment spans residues 186-206; the sequence is YLEYCSYLTVAHIIINALIIL. At 207–234 the chain is on the cytoplasmic side; it reads RNRSVESKCRFDVQQRYLNSETLKTTQT. Residues 235-255 traverse the membrane as a helical segment; it reads ICYLSIAQFLAMFLYSGGVLF. At 256 to 270 the chain is on the extracellular side; it reads MRKNQKNIPTLIYIN. A helical transmembrane segment spans residues 271–291; sequence VIVWVYAPPYACVSLAPLILF. Residues 292-326 are Cytoplasmic-facing; sequence SLWNLKKQRQIRIQSITVQKETQEDHIRKLQLSWG.

This sequence belongs to the nematode receptor-like protein sra family.

Its subcellular location is the membrane. This Caenorhabditis briggsae protein is Serpentine receptor class alpha-12.